The sequence spans 500 residues: Cobyric acid synthase (500 aa).

Residues 253-446 (KIGVAAIYFP…FHGFFDRPEV (194 aa)) form the GATase cobBQ-type domain. The active-site Nucleophile is C334. Residue H438 is part of the active site.

The protein belongs to the CobB/CobQ family. CobQ subfamily.

The protein operates within cofactor biosynthesis; adenosylcobalamin biosynthesis. Its function is as follows. Catalyzes amidations at positions B, D, E, and G on adenosylcobyrinic A,C-diamide. NH(2) groups are provided by glutamine, and one molecule of ATP is hydrogenolyzed for each amidation. The protein is Cobyric acid synthase of Chlorobaculum tepidum (strain ATCC 49652 / DSM 12025 / NBRC 103806 / TLS) (Chlorobium tepidum).